Consider the following 382-residue polypeptide: Galactokinase (382 aa).

34-37 (EHTD) lines the substrate pocket. Position 124–130 (124–130 (GAGLSSS)) interacts with ATP. Serine 130 and glutamate 162 together coordinate Mg(2+). The active-site Proton acceptor is aspartate 174. Tyrosine 223 contributes to the substrate binding site.

This sequence belongs to the GHMP kinase family. GalK subfamily.

The protein localises to the cytoplasm. It catalyses the reaction alpha-D-galactose + ATP = alpha-D-galactose 1-phosphate + ADP + H(+). The protein operates within carbohydrate metabolism; galactose metabolism. Its function is as follows. Catalyzes the transfer of the gamma-phosphate of ATP to D-galactose to form alpha-D-galactose-1-phosphate (Gal-1-P). The chain is Galactokinase from Escherichia coli O17:K52:H18 (strain UMN026 / ExPEC).